The chain runs to 306 residues: uncharacterized protein (306 aa).

This is an uncharacterized protein from Treponema pallidum (strain Nichols).